Here is a 179-residue protein sequence, read N- to C-terminus: Protein GrpE (179 aa).

Residues 1–23 are disordered; that stretch reads MSEEIKEQNVQDAQNENLAPDSV.

It belongs to the GrpE family. Homodimer.

The protein resides in the cytoplasm. Participates actively in the response to hyperosmotic and heat shock by preventing the aggregation of stress-denatured proteins, in association with DnaK and GrpE. It is the nucleotide exchange factor for DnaK and may function as a thermosensor. Unfolded proteins bind initially to DnaJ; upon interaction with the DnaJ-bound protein, DnaK hydrolyzes its bound ATP, resulting in the formation of a stable complex. GrpE releases ADP from DnaK; ATP binding to DnaK triggers the release of the substrate protein, thus completing the reaction cycle. Several rounds of ATP-dependent interactions between DnaJ, DnaK and GrpE are required for fully efficient folding. This chain is Protein GrpE, found in Campylobacter curvus (strain 525.92).